The chain runs to 444 residues: Putative permease IIC component YwbA (444 aa).

Residues 8 to 421 (MEEKIMPVAG…LITCAIYYPF (414 aa)) form the PTS EIIC type-3 domain. Transmembrane regions (helical) follow at residues 31-51 (GIIL…LTSL), 72-92 (LGYP…FGIA), 104-124 (LSAG…EVPF), 138-158 (GIPI…IALF), 187-207 (FVAL…RLLI), 223-243 (LGTP…AEFV), 246-266 (LLWS…APIW), 291-311 (FFQI…VLTM), 349-371 (PLLI…IGMS), and 402-422 (SGAV…YPFF).

It localises to the cell membrane. Functionally, the phosphoenolpyruvate-dependent sugar phosphotransferase system (PTS), a major carbohydrate active -transport system, catalyzes the phosphorylation of incoming sugar substrates concomitant with their translocation across the cell membrane. In Bacillus subtilis (strain 168), this protein is Putative permease IIC component YwbA (ywbA).